We begin with the raw amino-acid sequence, 779 residues long: Phosphatidylinositol 4-phosphate 5-kinase 4 (779 aa).

Residues 20-61 form a disordered region; the sequence is QQAKKRANSIFGTVSVAPQTDDDATTTTEENDDETSTNRSSI. Positions 39–54 are enriched in acidic residues; sequence TDDDATTTTEENDDET. MORN repeat units follow at residues 77–99, 100–122, 123–145, 146–168, 169–191, 192–214, 215–237, and 238–259; these read YTGQ…DGCM, YIGD…SGAT, YEGE…SGDT, YKGQ…NGDV, YDGE…DGSY, YMGE…DGNR, YDGF…DGSF, and YVGH…SGDD. Residues 382–775 enclose the PIPK domain; sequence TISKGHRNYE…RFRDFIFKVF (394 aa). The activation loop stretch occupies residues 735–756; sequence YDISKKLEHAYKSIQYDPTSIS.

The enzyme catalyses a 1,2-diacyl-sn-glycero-3-phospho-(1D-myo-inositol 4-phosphate) + ATP = a 1,2-diacyl-sn-glycero-3-phospho-(1D-myo-inositol-4,5-bisphosphate) + ADP + H(+). In Arabidopsis thaliana (Mouse-ear cress), this protein is Phosphatidylinositol 4-phosphate 5-kinase 4 (PIP5K4).